A 150-amino-acid polypeptide reads, in one-letter code: MDRTFVMIKPDGVQRGQVGGIVSRFEAKGLKLVAARFEVLPESRVIEQYQEHLSKPFFPSLKSYIRGGPCFLMVWEGRNVVAIVRKMIGATNPQEAAPGTIRGDFGIDIGRNVIHASDSPESAAREIGIHFKPAELFAYTRVDESVVYEY.

Residues lysine 9, phenylalanine 57, arginine 85, threonine 91, arginine 102, and asparagine 112 each coordinate ATP. The active-site Pros-phosphohistidine intermediate is the histidine 115.

Belongs to the NDK family. Requires Mg(2+) as cofactor.

Its subcellular location is the cytoplasm. It catalyses the reaction a 2'-deoxyribonucleoside 5'-diphosphate + ATP = a 2'-deoxyribonucleoside 5'-triphosphate + ADP. It carries out the reaction a ribonucleoside 5'-diphosphate + ATP = a ribonucleoside 5'-triphosphate + ADP. Its function is as follows. Major role in the synthesis of nucleoside triphosphates other than ATP. The ATP gamma phosphate is transferred to the NDP beta phosphate via a ping-pong mechanism, using a phosphorylated active-site intermediate. The sequence is that of Nucleoside diphosphate kinase from Methanoregula boonei (strain DSM 21154 / JCM 14090 / 6A8).